A 275-amino-acid chain; its full sequence is 2,3,4,5-tetrahydropyridine-2,6-dicarboxylate N-succinyltransferase (275 aa).

The protein belongs to the transferase hexapeptide repeat family.

The protein resides in the cytoplasm. It carries out the reaction (S)-2,3,4,5-tetrahydrodipicolinate + succinyl-CoA + H2O = (S)-2-succinylamino-6-oxoheptanedioate + CoA. It functions in the pathway amino-acid biosynthesis; L-lysine biosynthesis via DAP pathway; LL-2,6-diaminopimelate from (S)-tetrahydrodipicolinate (succinylase route): step 1/3. This is 2,3,4,5-tetrahydropyridine-2,6-dicarboxylate N-succinyltransferase from Burkholderia ambifaria (strain MC40-6).